The sequence spans 598 residues: Aspartate--tRNA ligase (598 aa).

Position 182 (Glu-182) interacts with L-aspartate. Residues Gln-206–Lys-209 form an aspartate region. Arg-228 provides a ligand contact to L-aspartate. ATP contacts are provided by residues Arg-228 to Glu-230 and Gln-237. His-456 contributes to the L-aspartate binding site. Position 490 (Glu-490) interacts with ATP. An L-aspartate-binding site is contributed by Arg-497. Gly-542–Arg-545 contributes to the ATP binding site.

It belongs to the class-II aminoacyl-tRNA synthetase family. Type 1 subfamily. In terms of assembly, homodimer.

Its subcellular location is the cytoplasm. The enzyme catalyses tRNA(Asp) + L-aspartate + ATP = L-aspartyl-tRNA(Asp) + AMP + diphosphate. In terms of biological role, catalyzes the attachment of L-aspartate to tRNA(Asp) in a two-step reaction: L-aspartate is first activated by ATP to form Asp-AMP and then transferred to the acceptor end of tRNA(Asp). This Agathobacter rectalis (strain ATCC 33656 / DSM 3377 / JCM 17463 / KCTC 5835 / VPI 0990) (Eubacterium rectale) protein is Aspartate--tRNA ligase.